Consider the following 278-residue polypeptide: 4-diphosphocytidyl-2-C-methyl-D-erythritol kinase (278 aa).

The active site involves K9. Position 93–103 (93–103) interacts with ATP; sequence PLGGGLGGGSS. The active site involves D135.

Belongs to the GHMP kinase family. IspE subfamily.

The enzyme catalyses 4-CDP-2-C-methyl-D-erythritol + ATP = 4-CDP-2-C-methyl-D-erythritol 2-phosphate + ADP + H(+). It participates in isoprenoid biosynthesis; isopentenyl diphosphate biosynthesis via DXP pathway; isopentenyl diphosphate from 1-deoxy-D-xylulose 5-phosphate: step 3/6. Its function is as follows. Catalyzes the phosphorylation of the position 2 hydroxy group of 4-diphosphocytidyl-2C-methyl-D-erythritol. In Nitrosomonas eutropha (strain DSM 101675 / C91 / Nm57), this protein is 4-diphosphocytidyl-2-C-methyl-D-erythritol kinase.